A 511-amino-acid polypeptide reads, in one-letter code: Ribosome biogenesis protein YTM1 (511 aa).

A ubiquitin-like (UBL) domain region spans residues 9-112; that stretch reads VKVVFVTRDE…EVSLSIEYIR (104 aa). A sufficient for interaction with ERB1 and association with 66S pre-ribosomes region spans residues 122–511; the sequence is SFSNPDWVAA…IQINNNPQSA (390 aa). 7 WD repeats span residues 124–168, 170–208, 248–287, 332–372, 383–423, 429–470, and 477–511; these read SNPD…TGQL, GHNSAAKAVRWISNDQLVSGGSDRLLYLWNPDGKKYRRK, GHTAPINDLAVHAKTGKIISASADGSVGLWSTDYNDMPAI, GHSA…AVQS, TRST…QVAT, GHTN…SLHV, and TENNAVFGVDWKQNLGIVSGGQDNKIQINNNPQSA. The disordered stretch occupies residues 207–228; sequence RKEPGQVGKKELNYDSEEDSDE. A compositionally biased stretch (basic and acidic residues) spans 208–219; it reads KEPGQVGKKELN.

Belongs to the WD repeat WDR12/YTM1 family. Component of the NOP7 complex, composed of ERB1, NOP7 and YTM1. The complex is held together by ERB1, which interacts with NOP7 via its N-terminal domain and with YTM1 via a high-affinity interaction between the seven-bladed beta-propeller domains of the 2 proteins. The NOP7 complex associates with the 66S pre-ribosome. Interacts (via UBL domain) with MDN1 (via VWFA/MIDAS domain).

The protein resides in the nucleus. Its subcellular location is the nucleolus. The protein localises to the nucleoplasm. Its function is as follows. Component of the NOP7 complex, which is required for maturation of the 25S and 5.8S ribosomal RNAs and formation of the 60S ribosome. In Yarrowia lipolytica (strain CLIB 122 / E 150) (Yeast), this protein is Ribosome biogenesis protein YTM1.